Consider the following 371-residue polypeptide: Mannonate dehydratase (371 aa).

Belongs to the mannonate dehydratase family. The cofactor is Fe(2+). Mn(2+) is required as a cofactor.

The enzyme catalyses D-mannonate = 2-dehydro-3-deoxy-D-gluconate + H2O. The protein operates within carbohydrate metabolism; pentose and glucuronate interconversion. Functionally, catalyzes the dehydration of D-mannonate. This chain is Mannonate dehydratase, found in Geobacillus thermodenitrificans (strain NG80-2).